Here is a 146-residue protein sequence, read N- to C-terminus: Large ribosomal subunit protein uL11 (146 aa).

This sequence belongs to the universal ribosomal protein uL11 family. Part of the ribosomal stalk of the 50S ribosomal subunit. Interacts with L10 and the large rRNA to form the base of the stalk. L10 forms an elongated spine to which L12 dimers bind in a sequential fashion forming a multimeric L10(L12)X complex. In terms of processing, one or more lysine residues are methylated.

Forms part of the ribosomal stalk which helps the ribosome interact with GTP-bound translation factors. The sequence is that of Large ribosomal subunit protein uL11 from Buchnera aphidicola subsp. Baizongia pistaciae (strain Bp).